A 221-amino-acid polypeptide reads, in one-letter code: UPF0502 protein Sputcn32_1644 (221 aa).

This sequence belongs to the UPF0502 family.

The protein is UPF0502 protein Sputcn32_1644 of Shewanella putrefaciens (strain CN-32 / ATCC BAA-453).